We begin with the raw amino-acid sequence, 454 residues long: Laccase-3 (454 aa).

Plastocyanin-like domains are found at residues 1–95 (PGPT…GPAT) and 101–252 (DLGV…YSGA). Residue N24 is glycosylated (N-linked (GlcNAc...) asparagine). H29, H31, H73, and H75 together coordinate Cu cation. N-linked (GlcNAc...) asparagine glycans are attached at residues N138, N169, N218, N314, and N334. Residues 319–454 (DVDWKKPILQ…SEGLAVQFQG (136 aa)) form the Plastocyanin-like 3 domain. Cu cation is bound by residues H375, H378, and H380. N395 carries an N-linked (GlcNAc...) asparagine glycan. Residues H437, C438, H439, and H443 each coordinate Cu cation.

This sequence belongs to the multicopper oxidase family. It depends on Cu cation as a cofactor.

Its subcellular location is the secreted. The enzyme catalyses 4 hydroquinone + O2 = 4 benzosemiquinone + 2 H2O. In terms of biological role, lignin degradation and detoxification of lignin-derived products. This is Laccase-3 (lcc3) from Botryotinia fuckeliana (Noble rot fungus).